The chain runs to 2161 residues: DNA polymerase epsilon catalytic subunit A (2161 aa).

3 short sequence motifs (nuclear localization signal) span residues 5-12 (NRRRDRKD), 1137-1144 (HKKVREKD), and 1239-1246 (LKKRKWKV). Zn(2+)-binding residues include Cys-2038, Cys-2041, Cys-2063, and Cys-2068. The segment at 2038-2068 (CSNCDAYRDLDICRDPALLTEKEWSCADTQC) adopts a CysA-type zinc-finger fold. [4Fe-4S] cluster contacts are provided by Cys-2099, Cys-2102, Cys-2114, and Cys-2116. The CysB motif signature appears at 2099 to 2116 (CIRCNQVKAAHLTEQCEC). Residues 2130 to 2137 (SKRMEIFM) carry the Nuclear localization signal 4 motif.

This sequence belongs to the DNA polymerase type-B family. In terms of assembly, heterotetramer. Subunit of the DNA polymerase II. Interacts (via C-terminus) with DPB2. Interacts with LHP1/TFL2. It depends on [4Fe-4S] cluster as a cofactor. In terms of tissue distribution, mostly expressed at low levels in inflorescence (floral meristem and flowers until anthesis), and, to a lower extent, in roots, seeds and leaves.

It localises to the nucleus. It carries out the reaction DNA(n) + a 2'-deoxyribonucleoside 5'-triphosphate = DNA(n+1) + diphosphate. Its function is as follows. DNA polymerase II, which participates in chromosomal DNA replication. Required for the timing and determination of cell fate during plant embryogenesis and root pole development, by promoting cell cycle and cell type patterning. Necessary for proper shoot (SAM) and root apical meristem (RAM) functions. Involved in maintaining epigenetic states, controlling hypersensitive response (HR), and mediating abscisic acid (ABA) signaling. Required for flowering repression through a mechanism involving epigenetic gene silencing. May participate in processes involved in chromatin-mediated cellular memory. The chain is DNA polymerase epsilon catalytic subunit A (POL2A) from Arabidopsis thaliana (Mouse-ear cress).